Here is a 725-residue protein sequence, read N- to C-terminus: Putative oligopeptide transporter YGL114W (725 aa).

9 helical membrane passes run 28-48 (ATIA…QFGL), 134-154 (FREL…FAVP), 254-274 (IIIL…SYFV), 353-373 (WILW…FIVV), 449-469 (ISGC…LFGI), 472-492 (IPLY…ILGI), 564-584 (FCAQ…MYLC), 644-664 (YGYG…GIFN), and 697-717 (IVFS…NMLF).

This sequence belongs to the oligopeptide OPT transporter family.

The protein localises to the membrane. The polypeptide is Putative oligopeptide transporter YGL114W (Saccharomyces cerevisiae (strain ATCC 204508 / S288c) (Baker's yeast)).